A 230-amino-acid chain; its full sequence is Peptidyl-prolyl cis-trans isomerase FKBP16-4, chloroplastic (230 aa).

The transit peptide at 1–56 directs the protein to the chloroplast; it reads MILTMKLVHPLHHSLSSSIPFPSRKRQSKPYRCSLPSPGCEKVIRTETVLPPAPVS. The PPIase FKBP-type domain occupies 123–217; the sequence is GSRVAVHYVA…ELDIELLSIK (95 aa).

This sequence belongs to the FKBP-type PPIase family.

The protein localises to the plastid. Its subcellular location is the chloroplast thylakoid lumen. The enzyme catalyses [protein]-peptidylproline (omega=180) = [protein]-peptidylproline (omega=0). PPIases accelerate the folding of proteins. It catalyzes the cis-trans isomerization of proline imidic peptide bonds in oligopeptides. This Arabidopsis thaliana (Mouse-ear cress) protein is Peptidyl-prolyl cis-trans isomerase FKBP16-4, chloroplastic (FKBP16-4).